Reading from the N-terminus, the 319-residue chain is Aspartate carbamoyltransferase catalytic subunit (319 aa).

Positions 57 and 58 each coordinate carbamoyl phosphate. Lys85 lines the L-aspartate pocket. Residues Arg107, His135, and Gln138 each coordinate carbamoyl phosphate. 2 residues coordinate L-aspartate: Arg168 and Arg222. Carbamoyl phosphate is bound by residues Gly263 and Pro264.

Belongs to the aspartate/ornithine carbamoyltransferase superfamily. ATCase family. As to quaternary structure, heterododecamer (2C3:3R2) of six catalytic PyrB chains organized as two trimers (C3), and six regulatory PyrI chains organized as three dimers (R2).

The catalysed reaction is carbamoyl phosphate + L-aspartate = N-carbamoyl-L-aspartate + phosphate + H(+). It participates in pyrimidine metabolism; UMP biosynthesis via de novo pathway; (S)-dihydroorotate from bicarbonate: step 2/3. Its function is as follows. Catalyzes the condensation of carbamoyl phosphate and aspartate to form carbamoyl aspartate and inorganic phosphate, the committed step in the de novo pyrimidine nucleotide biosynthesis pathway. In Paracoccus denitrificans (strain Pd 1222), this protein is Aspartate carbamoyltransferase catalytic subunit.